We begin with the raw amino-acid sequence, 966 residues long: Leucine--tRNA ligase (966 aa).

The short motif at 71 to 82 is the 'HIGH' region element; it reads PYPSGAGLHVGH. The interval 561 to 580 is disordered; sequence YSPRTFDPDDADTKPETPLS. The segment covering 571–580 has biased composition (basic and acidic residues); that stretch reads ADTKPETPLS. The 'KMSKS' region motif lies at 734–738; it reads KMGKS. Lysine 737 contacts ATP.

The protein belongs to the class-I aminoacyl-tRNA synthetase family.

The protein resides in the cytoplasm. It carries out the reaction tRNA(Leu) + L-leucine + ATP = L-leucyl-tRNA(Leu) + AMP + diphosphate. In Streptomyces coelicolor (strain ATCC BAA-471 / A3(2) / M145), this protein is Leucine--tRNA ligase.